The primary structure comprises 353 residues: RNA 3'-terminal phosphate cyclase (353 aa).

ATP contacts are provided by residues Gln-100 and 289 to 292 (HMSD). Catalysis depends on His-315, which acts as the Tele-AMP-histidine intermediate.

It belongs to the RNA 3'-terminal cyclase family. Type 1 subfamily.

It is found in the cytoplasm. It catalyses the reaction a 3'-end 3'-phospho-ribonucleotide-RNA + ATP = a 3'-end 2',3'-cyclophospho-ribonucleotide-RNA + AMP + diphosphate. Catalyzes the conversion of 3'-phosphate to a 2',3'-cyclic phosphodiester at the end of RNA. The mechanism of action of the enzyme occurs in 3 steps: (A) adenylation of the enzyme by ATP; (B) transfer of adenylate to an RNA-N3'P to produce RNA-N3'PP5'A; (C) and attack of the adjacent 2'-hydroxyl on the 3'-phosphorus in the diester linkage to produce the cyclic end product. The biological role of this enzyme is unknown but it is likely to function in some aspects of cellular RNA processing. The polypeptide is RNA 3'-terminal phosphate cyclase (Ignicoccus hospitalis (strain KIN4/I / DSM 18386 / JCM 14125)).